The primary structure comprises 554 residues: Glucose-binding protein GlcS (554 aa).

Residues 1–17 lie on the Cytoplasmic side of the membrane; that stretch reads MKRKYPYSLAKGLTSTQ. A helical membrane pass occupies residues 18–38; the sequence is IAVIVAVIVIVIIIGVVAGFV. Topologically, residues 39 to 525 are extracellular; sequence LTKGPSTTAV…YGLTNNTQKT (487 aa). A helical transmembrane segment spans residues 526–546; it reads SNSVMLFLLPFLALPLAIASI. The Cytoplasmic segment spans residues 547 to 554; the sequence is DNKYYLLK.

It belongs to the bacterial solute-binding protein 1 family. In terms of assembly, the complex is composed of two ATP-binding proteins (GlcV), two transmembrane proteins (GlcT and GlcU) and a solute-binding protein (GlcS).

The protein localises to the cell membrane. Binding of glucose is strongly inhibited by galactose and mannose. Part of the ABC transporter complex GlcSTUV involved in glucose uptake. Binds glucose. Can also bind galactose and mannose. This is Glucose-binding protein GlcS from Saccharolobus solfataricus (strain ATCC 35092 / DSM 1617 / JCM 11322 / P2) (Sulfolobus solfataricus).